A 397-amino-acid chain; its full sequence is Elongation factor Tu (397 aa).

A tr-type G domain is found at 10–206 (KPHVNIGTIG…EVDAYIPTPE (197 aa)). The segment at 19 to 26 (GHVDHGKT) is G1. 19–26 (GHVDHGKT) is a binding site for GTP. Thr-26 provides a ligand contact to Mg(2+). Residues 60–64 (GITIN) are G2. The segment at 81-84 (DCPG) is G3. GTP is bound by residues 81 to 85 (DCPGH) and 136 to 139 (NKAD). Residues 136–139 (NKAD) are G4. The interval 174 to 176 (SAL) is G5.

Belongs to the TRAFAC class translation factor GTPase superfamily. Classic translation factor GTPase family. EF-Tu/EF-1A subfamily. In terms of assembly, monomer.

It is found in the cytoplasm. The enzyme catalyses GTP + H2O = GDP + phosphate + H(+). In terms of biological role, GTP hydrolase that promotes the GTP-dependent binding of aminoacyl-tRNA to the A-site of ribosomes during protein biosynthesis. The chain is Elongation factor Tu from Clostridium acetobutylicum (strain ATCC 824 / DSM 792 / JCM 1419 / IAM 19013 / LMG 5710 / NBRC 13948 / NRRL B-527 / VKM B-1787 / 2291 / W).